A 296-amino-acid chain; its full sequence is MDFIRLKSRAKINLSIDVLGKRQDGYHFVEMIMQTIDLYDIVKIKELDEDEIKVKSTSLDIPLDEDNIVYKAAKILKNKFYIKKGVEIFIEKNIPVAAGMAGGSSNAAAVLVGLNHLWELRLSEDELKEIGLNLGADVPFCISGRPALAQGIGEKLTNIKGLPCDTNILICKPDLFVSTKEVYQGLDLNNIKKRPNNKYLIECLKSEDIKAVSESMVNILENVTIGKHKEISDIKQVMMKNNALGSMMSGSGPTVFGLFKNKEDALIGKKELLKKYKQVYVVNSSQKGVEICGEFN.

K11 is a catalytic residue. 95 to 105 (PVAAGMAGGSS) contacts ATP. The active site involves D137.

This sequence belongs to the GHMP kinase family. IspE subfamily.

The enzyme catalyses 4-CDP-2-C-methyl-D-erythritol + ATP = 4-CDP-2-C-methyl-D-erythritol 2-phosphate + ADP + H(+). It participates in isoprenoid biosynthesis; isopentenyl diphosphate biosynthesis via DXP pathway; isopentenyl diphosphate from 1-deoxy-D-xylulose 5-phosphate: step 3/6. Functionally, catalyzes the phosphorylation of the position 2 hydroxy group of 4-diphosphocytidyl-2C-methyl-D-erythritol. The chain is 4-diphosphocytidyl-2-C-methyl-D-erythritol kinase from Clostridioides difficile (strain 630) (Peptoclostridium difficile).